The following is a 248-amino-acid chain: NAD-dependent protein deacylase 2 (248 aa).

One can recognise a Deacetylase sirtuin-type domain in the interval 1-248; sequence MLQAASALRH…HVMAELISHI (248 aa). Residues 19 to 38 and 102 to 105 each bind NAD(+); these read GAGL…GGLY and QNVD. Residue His-122 is the Proton acceptor of the active site. 4 residues coordinate Zn(2+): Cys-130, Cys-133, Cys-152, and Cys-155. NAD(+) contacts are provided by residues 193-195, 219-221, and Ala-237; these read GTT and NPQ.

It belongs to the sirtuin family. Class III subfamily. Requires Zn(2+) as cofactor.

The protein localises to the cytoplasm. It catalyses the reaction N(6)-acetyl-L-lysyl-[protein] + NAD(+) + H2O = 2''-O-acetyl-ADP-D-ribose + nicotinamide + L-lysyl-[protein]. NAD-dependent protein deacetylase which modulates the activities of several proteins which are inactive in their acetylated form. This Pseudomonas syringae pv. tomato (strain ATCC BAA-871 / DC3000) protein is NAD-dependent protein deacylase 2 (cobB2).